Here is a 615-residue protein sequence, read N- to C-terminus: Chaperone protein HscA (615 aa).

It belongs to the heat shock protein 70 family.

In terms of biological role, chaperone involved in the maturation of iron-sulfur cluster-containing proteins. Has a low intrinsic ATPase activity which is markedly stimulated by HscB. Involved in the maturation of IscU. The polypeptide is Chaperone protein HscA (Xenorhabdus nematophila (strain ATCC 19061 / DSM 3370 / CCUG 14189 / LMG 1036 / NCIMB 9965 / AN6)).